The following is a 184-amino-acid chain: UPF0149 protein PputGB1_5261 (184 aa).

This sequence belongs to the UPF0149 family.

This is UPF0149 protein PputGB1_5261 from Pseudomonas putida (strain GB-1).